The sequence spans 193 residues: Peptidyl-tRNA hydrolase (193 aa).

Position 16 (Y16) interacts with tRNA. H21 (proton acceptor) is an active-site residue. F67, N69, and N115 together coordinate tRNA.

The protein belongs to the PTH family. Monomer.

It is found in the cytoplasm. It catalyses the reaction an N-acyl-L-alpha-aminoacyl-tRNA + H2O = an N-acyl-L-amino acid + a tRNA + H(+). Its function is as follows. Hydrolyzes ribosome-free peptidyl-tRNAs (with 1 or more amino acids incorporated), which drop off the ribosome during protein synthesis, or as a result of ribosome stalling. Catalyzes the release of premature peptidyl moieties from peptidyl-tRNA molecules trapped in stalled 50S ribosomal subunits, and thus maintains levels of free tRNAs and 50S ribosomes. The sequence is that of Peptidyl-tRNA hydrolase from Psychrobacter cryohalolentis (strain ATCC BAA-1226 / DSM 17306 / VKM B-2378 / K5).